The primary structure comprises 295 residues: MRHLITTKDFNKIEIMELFKEASDFLDEKPRTFLEGKSITTIFFENSTRTLSSFESAARRLGARVLRLDVSRSSSSKGETLYDTAANLDAMSPNAIVVRHANSGVPLILAKHMHCPVVNGGDGKHAHPTQALLDLFTIYNHFQSDVEGKKICIVGDIKNSRVAASNIELLSRFNLDITLVAPPHFMPNTHLKKYYKLDENIIANSDIIMSLRTQTERHNKTVYASLKDYANDFCIQKSLVKDKKLILLHPGPVNRNIDISDEMMSDERTLVLKQVKNGVAIRMAVLKKLILENEG.

Carbamoyl phosphate-binding residues include R49 and T50. K77 is an L-aspartate binding site. R99, H127, and Q130 together coordinate carbamoyl phosphate. L-aspartate-binding residues include R161 and R212. G251 and P252 together coordinate carbamoyl phosphate.

This sequence belongs to the aspartate/ornithine carbamoyltransferase superfamily. ATCase family. In terms of assembly, heterododecamer (2C3:3R2) of six catalytic PyrB chains organized as two trimers (C3), and six regulatory PyrI chains organized as three dimers (R2).

The enzyme catalyses carbamoyl phosphate + L-aspartate = N-carbamoyl-L-aspartate + phosphate + H(+). It participates in pyrimidine metabolism; UMP biosynthesis via de novo pathway; (S)-dihydroorotate from bicarbonate: step 2/3. In terms of biological role, catalyzes the condensation of carbamoyl phosphate and aspartate to form carbamoyl aspartate and inorganic phosphate, the committed step in the de novo pyrimidine nucleotide biosynthesis pathway. This chain is Aspartate carbamoyltransferase catalytic subunit, found in Campylobacter jejuni subsp. doylei (strain ATCC BAA-1458 / RM4099 / 269.97).